The sequence spans 325 residues: NADH-quinone oxidoreductase subunit H (325 aa).

8 helical membrane-spanning segments follow: residues 8 to 28, 81 to 101, 114 to 134, 159 to 179, 186 to 206, 237 to 257, 265 to 285, and 304 to 324; these read VIDI…VVTC, GIFT…FAIV, IGVL…LFAG, FLGL…LGAI, LWNV…GVAV, FFVG…TLFF, LPPF…FILI, and ICLP…LYNA.

It belongs to the complex I subunit 1 family. In terms of assembly, NDH-1 is composed of 13 different subunits. Subunits NuoA, H, J, K, L, M, N constitute the membrane sector of the complex.

The protein resides in the cell inner membrane. It catalyses the reaction a quinone + NADH + 5 H(+)(in) = a quinol + NAD(+) + 4 H(+)(out). Its function is as follows. NDH-1 shuttles electrons from NADH, via FMN and iron-sulfur (Fe-S) centers, to quinones in the respiratory chain. The immediate electron acceptor for the enzyme in this species is believed to be ubiquinone. Couples the redox reaction to proton translocation (for every two electrons transferred, four hydrogen ions are translocated across the cytoplasmic membrane), and thus conserves the redox energy in a proton gradient. This subunit may bind ubiquinone. This Sodalis glossinidius (strain morsitans) protein is NADH-quinone oxidoreductase subunit H.